Reading from the N-terminus, the 190-residue chain is Guanylate kinase (190 aa).

One can recognise a Guanylate kinase-like domain in the interval 3–185 (NYIFIISAPS…SLEQLCKYFE (183 aa)). An ATP-binding site is contributed by 10–17 (APSGAGKS).

It belongs to the guanylate kinase family.

Its subcellular location is the cytoplasm. It carries out the reaction GMP + ATP = GDP + ADP. Essential for recycling GMP and indirectly, cGMP. This Francisella tularensis subsp. holarctica (strain LVS) protein is Guanylate kinase.